A 225-amino-acid polypeptide reads, in one-letter code: 2-amino-5-formylamino-6-ribosylaminopyrimidin-4(3H)-one 5'-monophosphate deformylase (225 aa).

Positions 28, 30, 39, and 107 each coordinate Fe cation.

The protein belongs to the creatininase superfamily. FAPy deformylase family. As to quaternary structure, homodimer. The cofactor is Fe(2+). It depends on Zn(2+) as a cofactor.

The catalysed reaction is 2-amino-5-formylamino-6-(5-phospho-D-ribosylamino)pyrimidin-4(3H)-one + H2O = 2,5-diamino-6-(1-D-ribosylamino)pyrimidin-4(3H)-one 5'-phosphate + formate + H(+). It functions in the pathway cofactor biosynthesis; coenzyme F420 biosynthesis. The protein operates within cofactor biosynthesis; riboflavin biosynthesis. Its function is as follows. Catalyzes the hydrolysis of the formamide of 2-amino-5-formylamino-6-ribosylamino-4(3H)-pyrimidinone 5'-monophosphate (FAPy) to form 2,5-diamino-6-ribosylamino-4(3H)-pyrimidinone 5'-phosphate (APy). The protein is 2-amino-5-formylamino-6-ribosylaminopyrimidin-4(3H)-one 5'-monophosphate deformylase of Methanocaldococcus sp. (strain FS406-22).